Consider the following 240-residue polypeptide: Protein YIPF6 (240 aa).

Residues methionine 1–aspartate 91 are Cytoplasmic-facing. The helical transmembrane segment at tryptophan 92–serine 112 threads the bilayer. The Lumenal segment spans residues alanine 113–glutamate 125. Residues valine 126–glycine 146 form a helical membrane-spanning segment. Residues threonine 147 to serine 149 are Cytoplasmic-facing. The chain crosses the membrane as a helical span at residues phenylalanine 150–valine 170. At cysteine 171–arginine 172 the chain is on the lumenal side. Residues isoleucine 173–alanine 193 traverse the membrane as a helical segment. Topologically, residues serine 194–lysine 215 are cytoplasmic. The chain crosses the membrane as a helical span at residues alanine 216 to phenylalanine 236. Topologically, residues serine 237–histidine 240 are lumenal.

The protein belongs to the YIP1 family.

It localises to the golgi apparatus membrane. The sequence is that of Protein YIPF6 (yipf6) from Danio rerio (Zebrafish).